The chain runs to 375 residues: Coproporphyrin III ferrochelatase (375 aa).

Fe-coproporphyrin III-binding residues include Ser59 and Tyr128. 2 residues coordinate Fe(2+): His191 and Glu286.

The protein belongs to the ferrochelatase family.

The protein resides in the cytoplasm. It carries out the reaction Fe-coproporphyrin III + 2 H(+) = coproporphyrin III + Fe(2+). It functions in the pathway porphyrin-containing compound metabolism; protoheme biosynthesis. Its function is as follows. Involved in coproporphyrin-dependent heme b biosynthesis. Catalyzes the insertion of ferrous iron into coproporphyrin III to form Fe-coproporphyrin III. The chain is Coproporphyrin III ferrochelatase from Streptomyces coelicolor (strain ATCC BAA-471 / A3(2) / M145).